Consider the following 369-residue polypeptide: Transcription initiation factor IIA large subunit (369 aa).

Polar residues-rich tracts occupy residues 113 to 210 (HGNS…QNSP) and 218 to 233 (TESS…NDVP). Positions 113–248 (HGNSNYYSPP…IHDLDDAGSP (136 aa)) are disordered. Position 249 is a phosphoserine (serine 249). Positions 282 to 319 (IEDNEDEKKPPVDTPSDEAINSDLDDPDSDEAPETEEG) are disordered. The segment covering 304–319 (DLDDPDSDEAPETEEG) has biased composition (acidic residues).

Belongs to the TFIIA subunit 1 family. TFIIA is a heterodimer of the large subunit and the small subunit gamma.

It localises to the nucleus. In terms of biological role, TFIIA is a component of the transcription machinery of RNA polymerase II and plays an important role in transcriptional activation. TFIIA in a complex with tbp mediates transcriptional activity. The protein is Transcription initiation factor IIA large subunit of Schizosaccharomyces pombe (strain 972 / ATCC 24843) (Fission yeast).